A 356-amino-acid chain; its full sequence is S-adenosylmethionine:tRNA ribosyltransferase-isomerase (356 aa).

The protein belongs to the QueA family. In terms of assembly, monomer.

The protein resides in the cytoplasm. It catalyses the reaction 7-aminomethyl-7-carbaguanosine(34) in tRNA + S-adenosyl-L-methionine = epoxyqueuosine(34) in tRNA + adenine + L-methionine + 2 H(+). It participates in tRNA modification; tRNA-queuosine biosynthesis. In terms of biological role, transfers and isomerizes the ribose moiety from AdoMet to the 7-aminomethyl group of 7-deazaguanine (preQ1-tRNA) to give epoxyqueuosine (oQ-tRNA). The protein is S-adenosylmethionine:tRNA ribosyltransferase-isomerase of Escherichia coli O81 (strain ED1a).